We begin with the raw amino-acid sequence, 262 residues long: Small ribosomal subunit protein uS2 (262 aa).

This sequence belongs to the universal ribosomal protein uS2 family.

This Borrelia garinii subsp. bavariensis (strain ATCC BAA-2496 / DSM 23469 / PBi) (Borreliella bavariensis) protein is Small ribosomal subunit protein uS2.